The following is a 306-amino-acid chain: Dermonecrotic toxin LarSicTox-alphaIB1ai (306 aa).

A signal peptide is located at residue valine 1. Residues 2–27 (RATEKFASMYFFCHSPQSAETDVAER) constitute a propeptide that is removed on maturation. The active site involves histidine 38. The Mg(2+) site is built by glutamate 58 and aspartate 60. The active-site Nucleophile is histidine 74. 2 disulfide bridges follow: cysteine 78–cysteine 84 and cysteine 80–cysteine 223. Aspartate 118 is a binding site for Mg(2+). The N-linked (GlcNAc...) asparagine glycan is linked to asparagine 283.

The protein belongs to the arthropod phospholipase D family. Class II subfamily. Mg(2+) serves as cofactor. Expressed by the venom gland.

The protein resides in the secreted. It catalyses the reaction an N-(acyl)-sphingosylphosphocholine = an N-(acyl)-sphingosyl-1,3-cyclic phosphate + choline. It carries out the reaction an N-(acyl)-sphingosylphosphoethanolamine = an N-(acyl)-sphingosyl-1,3-cyclic phosphate + ethanolamine. The enzyme catalyses a 1-acyl-sn-glycero-3-phosphocholine = a 1-acyl-sn-glycero-2,3-cyclic phosphate + choline. The catalysed reaction is a 1-acyl-sn-glycero-3-phosphoethanolamine = a 1-acyl-sn-glycero-2,3-cyclic phosphate + ethanolamine. In terms of biological role, dermonecrotic toxins cleave the phosphodiester linkage between the phosphate and headgroup of certain phospholipids (sphingolipid and lysolipid substrates), forming an alcohol (often choline) and a cyclic phosphate. This toxin acts on sphingomyelin (SM). It may also act on ceramide phosphoethanolamine (CPE), lysophosphatidylcholine (LPC) and lysophosphatidylethanolamine (LPE), but not on lysophosphatidylserine (LPS), and lysophosphatidylglycerol (LPG). It acts by transphosphatidylation, releasing exclusively cyclic phosphate products as second products. Induces dermonecrosis, hemolysis, increased vascular permeability, edema, inflammatory response, and platelet aggregation. The chain is Dermonecrotic toxin LarSicTox-alphaIB1ai from Loxosceles arizonica (Arizona brown spider).